A 299-amino-acid polypeptide reads, in one-letter code: Bifunctional protein FolD (299 aa).

NADP(+) is bound by residues 168–170, serine 193, and isoleucine 234; that span reads GRS.

The protein belongs to the tetrahydrofolate dehydrogenase/cyclohydrolase family. In terms of assembly, homodimer.

It catalyses the reaction (6R)-5,10-methylene-5,6,7,8-tetrahydrofolate + NADP(+) = (6R)-5,10-methenyltetrahydrofolate + NADPH. The enzyme catalyses (6R)-5,10-methenyltetrahydrofolate + H2O = (6R)-10-formyltetrahydrofolate + H(+). It functions in the pathway one-carbon metabolism; tetrahydrofolate interconversion. Functionally, catalyzes the oxidation of 5,10-methylenetetrahydrofolate to 5,10-methenyltetrahydrofolate and then the hydrolysis of 5,10-methenyltetrahydrofolate to 10-formyltetrahydrofolate. The protein is Bifunctional protein FolD of Bartonella quintana (strain Toulouse) (Rochalimaea quintana).